Here is a 395-residue protein sequence, read N- to C-terminus: ATP phosphoribosyltransferase regulatory subunit (395 aa).

Belongs to the class-II aminoacyl-tRNA synthetase family. HisZ subfamily. As to quaternary structure, heteromultimer composed of HisG and HisZ subunits.

It localises to the cytoplasm. The protein operates within amino-acid biosynthesis; L-histidine biosynthesis; L-histidine from 5-phospho-alpha-D-ribose 1-diphosphate: step 1/9. Required for the first step of histidine biosynthesis. May allow the feedback regulation of ATP phosphoribosyltransferase activity by histidine. This chain is ATP phosphoribosyltransferase regulatory subunit, found in Azotobacter vinelandii (strain DJ / ATCC BAA-1303).